Here is a 305-residue protein sequence, read N- to C-terminus: UDP-3-O-acyl-N-acetylglucosamine deacetylase (305 aa).

Residues H79, H238, and D242 each contribute to the Zn(2+) site. H265 acts as the Proton donor in catalysis.

This sequence belongs to the LpxC family. Requires Zn(2+) as cofactor.

The enzyme catalyses a UDP-3-O-[(3R)-3-hydroxyacyl]-N-acetyl-alpha-D-glucosamine + H2O = a UDP-3-O-[(3R)-3-hydroxyacyl]-alpha-D-glucosamine + acetate. Its pathway is glycolipid biosynthesis; lipid IV(A) biosynthesis; lipid IV(A) from (3R)-3-hydroxytetradecanoyl-[acyl-carrier-protein] and UDP-N-acetyl-alpha-D-glucosamine: step 2/6. In terms of biological role, catalyzes the hydrolysis of UDP-3-O-myristoyl-N-acetylglucosamine to form UDP-3-O-myristoylglucosamine and acetate, the committed step in lipid A biosynthesis. The protein is UDP-3-O-acyl-N-acetylglucosamine deacetylase of Shewanella woodyi (strain ATCC 51908 / MS32).